The chain runs to 204 residues: Lymphotoxin-alpha (204 aa).

A signal peptide spans 1–33; sequence MTPPGRLYLLRVRSAPVLLLLGLLLGLPPGAQG. The 143-residue stretch at 62 to 204 folds into the THD domain; the sequence is PAAHLIGDPS…SSVFFGAFAL (143 aa). N-linked (GlcNAc...) asparagine glycosylation occurs at N95. C119 and C155 are disulfide-bonded.

It belongs to the tumor necrosis factor family. As to quaternary structure, homotrimer, and heterotrimer of either two LTB and one LTA subunits or (less prevalent) two LTA and one LTB subunits. Interacts with TNFRSF14.

Its subcellular location is the secreted. It localises to the membrane. Its function is as follows. Cytokine that in its homotrimeric form binds to TNFRSF1A/TNFR1, TNFRSF1B/TNFBR and TNFRSF14/HVEM. In its heterotrimeric form with LTB binds to TNFRSF3/LTBR. Lymphotoxin is produced by lymphocytes and is cytotoxic for a wide range of tumor cells in vitro and in vivo. In Canis lupus familiaris (Dog), this protein is Lymphotoxin-alpha (LTA).